We begin with the raw amino-acid sequence, 1036 residues long: MKRVGLIGVIMAALLVISATPVMAGVSVKVSVNTTYPGELTVENFNLTPTYGRVPLTINITDVYLKNTNLTTPLSGTVYLYVNGQIKNNYYCSVTQTNNTTSWMSCGIEYTITDTSQTNISVGNKTDYLQNVTLTLWTTQLPESYVPQIPTLDLKDDGPISVDVLKIPSLKLSDDQVNVGETVTIEANWNYYAKEDGTRRIAVVSWADYRNIRSGATIDVATLLDKSKMTISLPEDGGSNSWDFTPTEPGYYVVVAFVDDTNFSDVLVFRATPTAAEKPTVSISVSKSVVALGDYIKVGASMSTDQAVKPIAVFITGANQTEVLCSYPEPGASTVGAWTVKEACGDDEWWIQIKDRPEGVYVAKIDVGEGELRAEATAVFQVVKPKILSLDVPSQHVKGQDLVITGTTNLAKSGTEDDSGSNAAENKAYLVIKDLSGKEVFNDTLSNQVYDSTGGKVKSNAVSLIDSDGSFKFKIDYFGKYFATETGFYIAEVKIQSDSLGEYTDTETATFEVVKPELKLIADKTTVTRGDTVTFTIDTNLKINSEVKFKIDDLAFCSGDPDCDVKEKTYYVDALGDVVIKLDVNTEAPLTDYKFTAEIPGLGISTDIRVSVVKQTLDISVDRTTVPRGGDIRVTGSSTADGVYIYASDSGVFTVGDTPVPDVDLKTKGSKINTTDVPYMEPDDNDNIDFQISVNVTGVETGTYYLYFYAPANISVVDKASDPQKIIAVTVTDPQIVEVTAPSKVPYQSKFEVSVLTDPGDRDNVEVRLVLSGPNVRDTTVADWASVDTNNYFNKTVDLRDIAKNKLNLDALEPGLYVLTAELRFKQSLGGEKVDSEDKLIEILGLTFEVDVNTPVVIGDEIVVNITTDRLEAGYDKIFVTLVGTNYKVTQVATLNSEGKATVTFETYGMSAGTYKVYVRDTMDTCSETDQYTWVDEHYMLDPASELAPMYKADDDVLVIKTIELLETAPTTTTVVTTTTAVTTTTVATTTTAVETTTTEAVTTTTEAQQGGGVPGFEAVFAIAGLLAVAYLLRRK.

Positions 1–24 are cleaved as a signal peptide; the sequence is MKRVGLIGVIMAALLVISATPVMA. Residues 1011–1033 traverse the membrane as a helical segment; that stretch reads GGGVPGFEAVFAIAGLLAVAYLL.

The protein resides in the membrane. This is an uncharacterized protein from Archaeoglobus fulgidus (strain ATCC 49558 / DSM 4304 / JCM 9628 / NBRC 100126 / VC-16).